An 855-amino-acid chain; its full sequence is Homeobox-leucine zipper protein HOX33 (855 aa).

Residues 1–21 (MAAAAVGGRGERLSSSSPTAA) are disordered. The segment at residues 26 to 89 (DAGKYVRYTP…NRRCREKQRK (64 aa)) is a DNA-binding region (homeobox). Residues 84–126 (REKQRKEASRLQTVNRKLNAMNKLLMEENDRLQKQVSRLVYEN) adopt a coiled-coil conformation. Positions 168–390 (DANNPAGLLA…LRHIRQIAHE (223 aa)) constitute an START domain.

The protein belongs to the HD-ZIP homeobox family. Class III subfamily. Expressed in seedlings, roots, stems, leaf sheaths and blades and panicles.

The protein resides in the nucleus. In terms of biological role, probable transcription factor. The sequence is that of Homeobox-leucine zipper protein HOX33 (HOX33) from Oryza sativa subsp. indica (Rice).